The sequence spans 240 residues: Uridylate kinase (240 aa).

Residue 12–15 participates in ATP binding; the sequence is KLSG. The segment at 20–25 is involved in allosteric activation by GTP; that stretch reads GDQGYG. Gly-54 is a binding site for UMP. ATP-binding residues include Gly-55 and Arg-59. UMP is bound by residues Asp-74 and 135-142; that span reads TGNPYFST. Residues Asn-163, Tyr-169, and Asp-172 each coordinate ATP.

This sequence belongs to the UMP kinase family. Homohexamer.

It localises to the cytoplasm. The enzyme catalyses UMP + ATP = UDP + ADP. Its pathway is pyrimidine metabolism; CTP biosynthesis via de novo pathway; UDP from UMP (UMPK route): step 1/1. With respect to regulation, allosterically activated by GTP. Inhibited by UTP. Catalyzes the reversible phosphorylation of UMP to UDP. This chain is Uridylate kinase, found in Oceanobacillus iheyensis (strain DSM 14371 / CIP 107618 / JCM 11309 / KCTC 3954 / HTE831).